We begin with the raw amino-acid sequence, 308 residues long: Cytochrome c biogenesis protein CcsA (308 aa).

A run of 7 helical transmembrane segments spans residues 2–22, 44–64, 71–91, 143–163, 212–232, 247–267, and 273–293; these read IVSTLEHILTHISLSIVSILI, GMLITFLCITGLLANNWIYLG, LSESLIFLSWSFALIHSIGYF, MILGYAALLCGSLLSVALMVI, VISLGFIFLTIGILSGAVWAN, WAFITWIVFAIYLHTRININL, and AIVASLGFIIIWICYFGVNLV.

Belongs to the CcmF/CycK/Ccl1/NrfE/CcsA family. In terms of assembly, may interact with Ccs1.

The protein localises to the plastid membrane. Required during biogenesis of c-type cytochromes (cytochrome c6 and cytochrome f) at the step of heme attachment. In Cuscuta reflexa (Southern Asian dodder), this protein is Cytochrome c biogenesis protein CcsA.